Here is a 585-residue protein sequence, read N- to C-terminus: Aspartate--tRNA ligase (585 aa).

Glu-169 provides a ligand contact to L-aspartate. An aspartate region spans residues 193–196 (QLFK). Arg-215 contacts L-aspartate. ATP is bound by residues 215 to 217 (RDE) and Gln-224. Position 443 (His-443) interacts with L-aspartate. Glu-478 contributes to the ATP binding site. Residue Arg-485 coordinates L-aspartate. 530 to 533 (GLDR) contacts ATP.

The protein belongs to the class-II aminoacyl-tRNA synthetase family. Type 1 subfamily. Homodimer.

The protein resides in the cytoplasm. The catalysed reaction is tRNA(Asp) + L-aspartate + ATP = L-aspartyl-tRNA(Asp) + AMP + diphosphate. Its function is as follows. Catalyzes the attachment of L-aspartate to tRNA(Asp) in a two-step reaction: L-aspartate is first activated by ATP to form Asp-AMP and then transferred to the acceptor end of tRNA(Asp). This chain is Aspartate--tRNA ligase, found in Pseudothermotoga lettingae (strain ATCC BAA-301 / DSM 14385 / NBRC 107922 / TMO) (Thermotoga lettingae).